Here is a 413-residue protein sequence, read N- to C-terminus: Phosphopentomutase (413 aa).

Mn(2+)-binding residues include Asp11, Asp306, His311, Asp347, His348, and His359.

Belongs to the phosphopentomutase family. It depends on Mn(2+) as a cofactor.

Its subcellular location is the cytoplasm. It carries out the reaction 2-deoxy-alpha-D-ribose 1-phosphate = 2-deoxy-D-ribose 5-phosphate. The catalysed reaction is alpha-D-ribose 1-phosphate = D-ribose 5-phosphate. Its pathway is carbohydrate degradation; 2-deoxy-D-ribose 1-phosphate degradation; D-glyceraldehyde 3-phosphate and acetaldehyde from 2-deoxy-alpha-D-ribose 1-phosphate: step 1/2. Its function is as follows. Isomerase that catalyzes the conversion of deoxy-ribose 1-phosphate (dRib-1-P) and ribose 1-phosphate (Rib-1-P) to deoxy-ribose 5-phosphate (dRib-5-P) and ribose 5-phosphate (Rib-5-P), respectively. This chain is Phosphopentomutase, found in Helicobacter pylori (strain Shi470).